A 350-amino-acid chain; its full sequence is Putative D-xylulose reductase (350 aa).

Zn(2+)-binding residues include Cys43, His68, and Glu154.

The protein belongs to the zinc-containing alcohol dehydrogenase family. Zn(2+) serves as cofactor.

It carries out the reaction xylitol + NAD(+) = D-xylulose + NADH + H(+). In Agrobacterium fabrum (strain C58 / ATCC 33970) (Agrobacterium tumefaciens (strain C58)), this protein is Putative D-xylulose reductase.